The following is a 385-amino-acid chain: ATP phosphoribosyltransferase regulatory subunit (385 aa).

It belongs to the class-II aminoacyl-tRNA synthetase family. HisZ subfamily. As to quaternary structure, heteromultimer composed of HisG and HisZ subunits.

The protein localises to the cytoplasm. Its pathway is amino-acid biosynthesis; L-histidine biosynthesis; L-histidine from 5-phospho-alpha-D-ribose 1-diphosphate: step 1/9. Its function is as follows. Required for the first step of histidine biosynthesis. May allow the feedback regulation of ATP phosphoribosyltransferase activity by histidine. This chain is ATP phosphoribosyltransferase regulatory subunit, found in Lysinibacillus sphaericus (strain C3-41).